A 229-amino-acid chain; its full sequence is MKKKAVILYSGGLDSTTCMAIAREEGFEPYAMSFDYGQRHSVELATAKANAKTMGASEHLVVSFDLRKVGGSALTADLDVPKEGIGAGIPVTYVPARNTIFLSFALGWAEVLGAFDIFIGVNALDYSGYPDCRPEYIAAFEATANLATRAGVEGTGRFVIHAPLIAMTKAEIIRKGLALGVDYGRTHSCYDPTPEGLACGLCDSCRLRLKGFAEAGVTDPVPYAVRSKK.

9-19 serves as a coordination point for ATP; that stretch reads YSGGLDSTTCM. Zn(2+) contacts are provided by C189, C199, C202, and C205.

The protein belongs to the QueC family. It depends on Zn(2+) as a cofactor.

It carries out the reaction 7-carboxy-7-deazaguanine + NH4(+) + ATP = 7-cyano-7-deazaguanine + ADP + phosphate + H2O + H(+). It participates in purine metabolism; 7-cyano-7-deazaguanine biosynthesis. Catalyzes the ATP-dependent conversion of 7-carboxy-7-deazaguanine (CDG) to 7-cyano-7-deazaguanine (preQ(0)). The polypeptide is 7-cyano-7-deazaguanine synthase (Geotalea daltonii (strain DSM 22248 / JCM 15807 / FRC-32) (Geobacter daltonii)).